We begin with the raw amino-acid sequence, 146 residues long: Cytidine deaminase (146 aa).

The CMP/dCMP-type deaminase domain occupies 13–140 (ECVQQLLVCS…ELLPSSFGPE (128 aa)). 54 to 60 (NIENACY) lines the substrate pocket. C65 contributes to the Zn(2+) binding site. The active-site Proton donor is the E67. Residues C99 and C102 each coordinate Zn(2+).

It belongs to the cytidine and deoxycytidylate deaminase family. As to quaternary structure, homotetramer. The cofactor is Zn(2+). In terms of tissue distribution, highly expressed in granulocytes while expression is very low in fibroblasts, chondrocytes, monocytes, and T- as well as B-cell lines.

It carries out the reaction cytidine + H2O + H(+) = uridine + NH4(+). The enzyme catalyses 2'-deoxycytidine + H2O + H(+) = 2'-deoxyuridine + NH4(+). Functionally, this enzyme scavenges exogenous and endogenous cytidine and 2'-deoxycytidine for UMP synthesis. This is Cytidine deaminase from Homo sapiens (Human).